We begin with the raw amino-acid sequence, 355 residues long: Protein RecA (355 aa).

An ATP-binding site is contributed by 67–74; it reads GPESSGKT.

It belongs to the RecA family.

It is found in the cytoplasm. Can catalyze the hydrolysis of ATP in the presence of single-stranded DNA, the ATP-dependent uptake of single-stranded DNA by duplex DNA, and the ATP-dependent hybridization of homologous single-stranded DNAs. It interacts with LexA causing its activation and leading to its autocatalytic cleavage. In Shewanella baltica (strain OS223), this protein is Protein RecA.